The following is a 1152-amino-acid chain: DNA-directed RNA polymerase subunit beta (1152 aa).

It belongs to the RNA polymerase beta chain family. As to quaternary structure, the RNAP catalytic core consists of 2 alpha, 1 beta, 1 beta' and 1 omega subunit. When a sigma factor is associated with the core the holoenzyme is formed, which can initiate transcription.

The catalysed reaction is RNA(n) + a ribonucleoside 5'-triphosphate = RNA(n+1) + diphosphate. Its function is as follows. DNA-dependent RNA polymerase catalyzes the transcription of DNA into RNA using the four ribonucleoside triphosphates as substrates. This is DNA-directed RNA polymerase subunit beta from Deinococcus geothermalis (strain DSM 11300 / CIP 105573 / AG-3a).